A 117-amino-acid polypeptide reads, in one-letter code: uncharacterized protein (117 aa).

A compositionally biased stretch (polar residues) spans 1-19 (MTSNPSSSADQPLSGTTVP). Positions 1–28 (MTSNPSSSADQPLSGTTVPGSVPGKAPE) are disordered. 2 consecutive transmembrane segments (helical) span residues 38-58 (AAVWSALIVGFLILILLLIFI) and 76-96 (LPLGVAILLAAVGGGLITVFA).

The protein localises to the cell membrane. This is an uncharacterized protein from Mycobacterium tuberculosis (strain ATCC 25618 / H37Rv).